Here is a 512-residue protein sequence, read N- to C-terminus: Bifunctional purine biosynthesis protein PurH (512 aa).

The 146-residue stretch at 1 to 146 (MTIKRALISV…KNHQDVTVIV (146 aa)) folds into the MGS-like domain.

It belongs to the PurH family.

It carries out the reaction (6R)-10-formyltetrahydrofolate + 5-amino-1-(5-phospho-beta-D-ribosyl)imidazole-4-carboxamide = 5-formamido-1-(5-phospho-D-ribosyl)imidazole-4-carboxamide + (6S)-5,6,7,8-tetrahydrofolate. The catalysed reaction is IMP + H2O = 5-formamido-1-(5-phospho-D-ribosyl)imidazole-4-carboxamide. The protein operates within purine metabolism; IMP biosynthesis via de novo pathway; 5-formamido-1-(5-phospho-D-ribosyl)imidazole-4-carboxamide from 5-amino-1-(5-phospho-D-ribosyl)imidazole-4-carboxamide (10-formyl THF route): step 1/1. Its pathway is purine metabolism; IMP biosynthesis via de novo pathway; IMP from 5-formamido-1-(5-phospho-D-ribosyl)imidazole-4-carboxamide: step 1/1. The chain is Bifunctional purine biosynthesis protein PurH from Bacillus subtilis (strain 168).